A 761-amino-acid chain; its full sequence is Neurotrypsin (761 aa).

Positions 1–21 (MALARCVLAVILGALSVVARA) are cleaved as a signal peptide. The segment at 25-87 (SRSPLHRPHP…PPTIPRRCGA (63 aa)) is disordered. Over residues 38–48 (RSQHAHYLPSS) the composition is skewed to low complexity. A Kringle domain is found at 85–157 (CGAGESWGNA…GKVDWGYCDC (73 aa)). 17 disulfide bridges follow: cysteine 85–cysteine 157, cysteine 101–cysteine 141, cysteine 130–cysteine 155, cysteine 191–cysteine 255, cysteine 204–cysteine 265, cysteine 235–cysteine 245, cysteine 298–cysteine 361, cysteine 311–cysteine 371, cysteine 341–cysteine 351, cysteine 411–cysteine 475, cysteine 424–cysteine 485, cysteine 455–cysteine 465, cysteine 505–cysteine 636, cysteine 547–cysteine 563, cysteine 651–cysteine 717, cysteine 680–cysteine 694, and cysteine 707–cysteine 736. N-linked (GlcNAc...) asparagine glycosylation is present at asparagine 93. SRCR domains are found at residues 166–267 (IRLV…SCVP), 273–373 (IRLA…TCYP), and 386–487 (IRLV…ICDY). The zymogen activation region stretch occupies residues 505–516 (CGLRLLHRRQKR). The Peptidase S1 domain occupies 517–760 (IIGGNNSLRG…FVPWIKSVTS (244 aa)). Residue asparagine 521 is glycosylated (N-linked (GlcNAc...) asparagine). Histidine 562 acts as the Charge relay system in catalysis. N-linked (GlcNAc...) asparagine glycosylation is present at asparagine 569. Aspartate 612 (charge relay system) is an active-site residue. Catalysis depends on serine 711, which acts as the Charge relay system.

The protein belongs to the peptidase S1 family. Most abundant in cerebral cortex, hippocampus and amygdala.

Its subcellular location is the secreted. Plays a role in neuronal plasticity and the proteolytic action may subserve structural reorganizations associated with learning and memory operations. This chain is Neurotrypsin (Prss12), found in Mus musculus (Mouse).